The primary structure comprises 437 residues: Glutamate-1-semialdehyde 2,1-aminomutase (437 aa).

The residue at position 274 (lysine 274) is an N6-(pyridoxal phosphate)lysine.

It belongs to the class-III pyridoxal-phosphate-dependent aminotransferase family. HemL subfamily. Homodimer. Requires pyridoxal 5'-phosphate as cofactor.

It localises to the cytoplasm. It catalyses the reaction (S)-4-amino-5-oxopentanoate = 5-aminolevulinate. The protein operates within porphyrin-containing compound metabolism; protoporphyrin-IX biosynthesis; 5-aminolevulinate from L-glutamyl-tRNA(Glu): step 2/2. The sequence is that of Glutamate-1-semialdehyde 2,1-aminomutase from Paracidovorax citrulli (strain AAC00-1) (Acidovorax citrulli).